The following is a 189-amino-acid chain: Stathmin-4 (189 aa).

S-palmitoyl cysteine attachment occurs at residues C20 and C22. One can recognise an SLD domain in the interval S48 to R189. 2 positions are modified to phosphoserine: E54 and S90. Residues S90–R189 adopt a coiled-coil conformation. The tract at residues Q168 to R189 is disordered.

This sequence belongs to the stathmin family. In terms of tissue distribution, nervous tissue.

The protein resides in the golgi apparatus. The protein localises to the cell projection. It localises to the growth cone. It is found in the axon. Exhibits microtubule-destabilizing activity. The sequence is that of Stathmin-4 (Stmn4) from Rattus norvegicus (Rat).